Here is a 361-residue protein sequence, read N- to C-terminus: Phosphoserine aminotransferase (361 aa).

L-glutamate is bound at residue Arg-42. Residues Ala-76–Arg-77, Trp-102, Thr-153, Asp-173, and Gln-196 each bind pyridoxal 5'-phosphate. Lys-197 is modified (N6-(pyridoxal phosphate)lysine). Residue Asn-238–Thr-239 coordinates pyridoxal 5'-phosphate.

This sequence belongs to the class-V pyridoxal-phosphate-dependent aminotransferase family. SerC subfamily. Homodimer. The cofactor is pyridoxal 5'-phosphate.

It is found in the cytoplasm. It carries out the reaction O-phospho-L-serine + 2-oxoglutarate = 3-phosphooxypyruvate + L-glutamate. It catalyses the reaction 4-(phosphooxy)-L-threonine + 2-oxoglutarate = (R)-3-hydroxy-2-oxo-4-phosphooxybutanoate + L-glutamate. Its pathway is amino-acid biosynthesis; L-serine biosynthesis; L-serine from 3-phospho-D-glycerate: step 2/3. The protein operates within cofactor biosynthesis; pyridoxine 5'-phosphate biosynthesis; pyridoxine 5'-phosphate from D-erythrose 4-phosphate: step 3/5. Functionally, catalyzes the reversible conversion of 3-phosphohydroxypyruvate to phosphoserine and of 3-hydroxy-2-oxo-4-phosphonooxybutanoate to phosphohydroxythreonine. The polypeptide is Phosphoserine aminotransferase (Yersinia pestis (strain Pestoides F)).